A 33-amino-acid chain; its full sequence is Omega-conotoxin-like Vn2 (33 aa).

Disulfide bonds link cysteine 3–cysteine 20, cysteine 10–cysteine 24, and cysteine 19–cysteine 28. Proline 33 bears the Proline amide mark.

In terms of tissue distribution, expressed by the venom duct.

The protein resides in the secreted. In terms of biological role, omega-conotoxins act at presynaptic membranes, they bind and block voltage-gated calcium channels (Cav). Has strong insecticidal properties at a dose of only 100 pmol/g of body weight (when injected into the haemocoel of the wax moth G.mellonella larvae). Provoques tremor and uncontrolled movements in insect larvae, that are typical symptoms caused by neurotoxins. On fish G.niger, intraperitoneal injection of the toxin causes full extension of the fins, change in posture, breathing difficulties (at 30 and 100 pmol/g body weight) and death (at 100 pmol/g body weight). The sequence is that of Omega-conotoxin-like Vn2 from Conus ventricosus (Mediterranean cone).